Reading from the N-terminus, the 633-residue chain is Micronuclear linker histone polyprotein (633 aa).

2 consecutive DNA-binding regions (HMG box) follow at residues 12-74 (PPKK…LFHY) and 96-164 (PKKP…KKWN). The disordered stretch occupies residues 170–633 (AAQKKQTKRK…AYGKKANKKQ (464 aa)). Over residues 174–190 (KQTKRKNSTSKSRRSSS) the composition is skewed to basic residues. Composition is skewed to low complexity over residues 212–224 (SSAS…SSSS) and 253–271 (NSTS…SSSS). Composition is skewed to basic residues over residues 272 to 309 (KNKK…RKSS) and 330 to 352 (SNKR…RKSS). Composition is skewed to basic and acidic residues over residues 353–374 (KSQE…EGQK) and 382–401 (AKRD…EART). The span at 406 to 416 (NKSASKASKSG) shows a compositional bias: low complexity. Basic residues predominate over residues 417-444 (SKSKGKSASKSKGKSSSKGKNSKSRSAS). Over residues 446 to 469 (PKSNAAQNSNNTHQTADSSENASS) the composition is skewed to polar residues. Basic and acidic residues predominate over residues 478 to 491 (RQREQKDMVNEKSN). Over residues 496-524 (SKGKKNSKSNTRSKSKSKSASKSRKNASK) the composition is skewed to basic residues. Composition is skewed to basic and acidic residues over residues 540–550 (SRSESKSKSEA) and 559–612 (EVIE…EDSK).

Post-translationally, all four histones are processed from the precursor molecule. Phosphorylated in growing and dividing cells but not in nongrowing (starved) cells. In terms of processing, the N-terminus of MIC LH-alpha and MIC LH-delta is blocked.

Its subcellular location is the nucleus. It is found in the chromosome. This chain is Micronuclear linker histone polyprotein (MLH), found in Tetrahymena thermophila (strain SB210).